The chain runs to 181 residues: Translationally-controlled tumor protein homolog (181 aa).

One can recognise a TCTP domain in the interval 1–181 (MLIYKDIFTD…VKEAILEEKC (181 aa)).

This sequence belongs to the TCTP family.

The protein resides in the cytoplasm. Its function is as follows. Involved in calcium binding and microtubule stabilization. The chain is Translationally-controlled tumor protein homolog (tct-1) from Caenorhabditis briggsae.